A 472-amino-acid polypeptide reads, in one-letter code: Aspartyl/glutamyl-tRNA(Asn/Gln) amidotransferase subunit B (472 aa).

The protein belongs to the GatB/GatE family. GatB subfamily. Heterotrimer of A, B and C subunits.

The enzyme catalyses L-glutamyl-tRNA(Gln) + L-glutamine + ATP + H2O = L-glutaminyl-tRNA(Gln) + L-glutamate + ADP + phosphate + H(+). The catalysed reaction is L-aspartyl-tRNA(Asn) + L-glutamine + ATP + H2O = L-asparaginyl-tRNA(Asn) + L-glutamate + ADP + phosphate + 2 H(+). Allows the formation of correctly charged Asn-tRNA(Asn) or Gln-tRNA(Gln) through the transamidation of misacylated Asp-tRNA(Asn) or Glu-tRNA(Gln) in organisms which lack either or both of asparaginyl-tRNA or glutaminyl-tRNA synthetases. The reaction takes place in the presence of glutamine and ATP through an activated phospho-Asp-tRNA(Asn) or phospho-Glu-tRNA(Gln). In Campylobacter jejuni subsp. jejuni serotype O:23/36 (strain 81-176), this protein is Aspartyl/glutamyl-tRNA(Asn/Gln) amidotransferase subunit B.